A 546-amino-acid polypeptide reads, in one-letter code: CTP synthase (546 aa).

An amidoligase domain region spans residues 1-266; that stretch reads MAKYYIFITG…DSYVCDRFCI (266 aa). Residue Ser14 participates in CTP binding. Ser14 contributes to the UTP binding site. Residues 15–20 and Asp72 contribute to the ATP site; that span reads SLGKGI. Mg(2+)-binding residues include Asp72 and Glu140. CTP-binding positions include 147 to 149, 187 to 192, and Lys223; these read DIE and KTKPTQ. Residues 187–192 and Lys223 each bind UTP; that span reads KTKPTQ. The Glutamine amidotransferase type-1 domain maps to 291 to 544; sequence NIGIIGKYTE…VKAAFDFKNK (254 aa). Position 352 (Gly352) interacts with L-glutamine. Catalysis depends on Cys379, which acts as the Nucleophile; for glutamine hydrolysis. L-glutamine is bound by residues 380-383, Glu403, and Arg470; that span reads LGMQ. Active-site residues include His517 and Glu519.

Belongs to the CTP synthase family. As to quaternary structure, homotetramer.

It catalyses the reaction UTP + L-glutamine + ATP + H2O = CTP + L-glutamate + ADP + phosphate + 2 H(+). The catalysed reaction is L-glutamine + H2O = L-glutamate + NH4(+). It carries out the reaction UTP + NH4(+) + ATP = CTP + ADP + phosphate + 2 H(+). Its pathway is pyrimidine metabolism; CTP biosynthesis via de novo pathway; CTP from UDP: step 2/2. Allosterically activated by GTP, when glutamine is the substrate; GTP has no effect on the reaction when ammonia is the substrate. The allosteric effector GTP functions by stabilizing the protein conformation that binds the tetrahedral intermediate(s) formed during glutamine hydrolysis. Inhibited by the product CTP, via allosteric rather than competitive inhibition. Catalyzes the ATP-dependent amination of UTP to CTP with either L-glutamine or ammonia as the source of nitrogen. Regulates intracellular CTP levels through interactions with the four ribonucleotide triphosphates. In Wigglesworthia glossinidia brevipalpis, this protein is CTP synthase.